The sequence spans 734 residues: Cytosolic endo-beta-N-acetylglucosaminidase (734 aa).

Met-1 bears the N-acetylmethionine mark. The segment at 1 to 45 (METSSVLTRGAARQRSPAAPEKQARDQTERRPGRRRQGRRINEDQ) is disordered. A compositionally biased stretch (basic and acidic residues) spans 22-31 (KQARDQTERR). Positions 281-375 (QNRVFFDSCD…DFFQNQDKFW (95 aa)) constitute a BRCT domain.

It belongs to the glycosyl hydrolase 85 family.

It is found in the cytoplasm. Its subcellular location is the cytosol. It carries out the reaction an N(4)-(oligosaccharide-(1-&gt;3)-[oligosaccharide-(1-&gt;6)]-beta-D-Man-(1-&gt;4)-beta-D-GlcNAc-(1-&gt;4)-alpha-D-GlcNAc)-L-asparaginyl-[protein] + H2O = an oligosaccharide-(1-&gt;3)-[oligosaccharide-(1-&gt;6)]-beta-D-Man-(1-&gt;4)-D-GlcNAc + N(4)-(N-acetyl-beta-D-glucosaminyl)-L-asparaginyl-[protein]. In terms of biological role, endoglycosidase that releases N-glycans from glycoproteins by cleaving the beta-1,4-glycosidic bond in the N,N'-diacetylchitobiose core. Involved in the processing of free oligosaccharides in the cytosol. The polypeptide is Cytosolic endo-beta-N-acetylglucosaminidase (Engase) (Mus musculus (Mouse)).